The primary structure comprises 320 residues: Protoheme IX farnesyltransferase (320 aa).

The interval 1–24 (MSMITERPVSDPAGQSVSATGDGA) is disordered. The next 8 membrane-spanning stretches (helical) occupy residues 33–55 (AVVAAYVALTKPRIVELLLVTTV), 68–88 (LWLMAVVLVGGSLAAGAASVL), 117–137 (NALIFGLVLATVSVTLLAVFT), 140–160 (LAAGLTLAAILYYDLVYTAWL), 183–203 (WAAVTGSLAPAAWALFGVVFF), 241–261 (ILVFAWLTVLVSLVTWPLGAG), 262–282 (MGPIYGLPTLVVGVIFLVEAH), and 300–320 (FHWSTTYLTVVFAAVALDALI).

Belongs to the UbiA prenyltransferase family. Protoheme IX farnesyltransferase subfamily.

The protein resides in the cell membrane. The enzyme catalyses heme b + (2E,6E)-farnesyl diphosphate + H2O = Fe(II)-heme o + diphosphate. Its pathway is porphyrin-containing compound metabolism; heme O biosynthesis; heme O from protoheme: step 1/1. In terms of biological role, converts heme B (protoheme IX) to heme O by substitution of the vinyl group on carbon 2 of heme B porphyrin ring with a hydroxyethyl farnesyl side group. This chain is Protoheme IX farnesyltransferase, found in Salinispora tropica (strain ATCC BAA-916 / DSM 44818 / JCM 13857 / NBRC 105044 / CNB-440).